Reading from the N-terminus, the 721-residue chain is Polyribonucleotide nucleotidyltransferase (721 aa).

Mg(2+)-binding residues include aspartate 495 and aspartate 501. Residues proline 562 to isoleucine 621 form the KH domain. Residues glycine 631–arginine 699 form the S1 motif domain. The disordered stretch occupies residues valine 701–asparagine 721. The span at glutamate 711–asparagine 721 shows a compositional bias: pro residues.

Belongs to the polyribonucleotide nucleotidyltransferase family. Mg(2+) is required as a cofactor.

Its subcellular location is the cytoplasm. The catalysed reaction is RNA(n+1) + phosphate = RNA(n) + a ribonucleoside 5'-diphosphate. In terms of biological role, involved in mRNA degradation. Catalyzes the phosphorolysis of single-stranded polyribonucleotides processively in the 3'- to 5'-direction. The sequence is that of Polyribonucleotide nucleotidyltransferase from Prochlorococcus marinus (strain MIT 9215).